The following is a 679-amino-acid chain: Glycine--tRNA ligase beta subunit (679 aa).

This sequence belongs to the class-II aminoacyl-tRNA synthetase family. As to quaternary structure, tetramer of two alpha and two beta subunits.

It is found in the cytoplasm. The catalysed reaction is tRNA(Gly) + glycine + ATP = glycyl-tRNA(Gly) + AMP + diphosphate. The polypeptide is Glycine--tRNA ligase beta subunit (Thermodesulfovibrio yellowstonii (strain ATCC 51303 / DSM 11347 / YP87)).